Reading from the N-terminus, the 238-residue chain is RNA pyrophosphohydrolase (238 aa).

Residues 6–149 form the Nudix hydrolase domain; it reads GFRPNVGIIL…KREVYQMALS (144 aa). The Nudix box signature appears at 38 to 59; the sequence is GGIKYGETPEQAMYRELHEEVG. The tract at residues 161-238 is disordered; the sequence is APLSPYGRGG…PDDTPSKDSL (78 aa). Over residues 171–181 the composition is skewed to basic and acidic residues; the sequence is PHRERDGRDNR. A compositionally biased stretch (polar residues) spans 188 to 199; sequence RNDQNTRGQRQP. The segment covering 204–217 has biased composition (low complexity); the sequence is VTTSTVIVETVITS.

The protein belongs to the Nudix hydrolase family. RppH subfamily. A divalent metal cation serves as cofactor.

Its function is as follows. Accelerates the degradation of transcripts by removing pyrophosphate from the 5'-end of triphosphorylated RNA, leading to a more labile monophosphorylated state that can stimulate subsequent ribonuclease cleavage. The protein is RNA pyrophosphohydrolase of Ralstonia nicotianae (strain ATCC BAA-1114 / GMI1000) (Ralstonia solanacearum).